We begin with the raw amino-acid sequence, 106 residues long: ATP-dependent Clp protease adapter protein ClpS (106 aa).

The span at 1–13 (MPRNTSHEHDHGL) shows a compositional bias: basic and acidic residues. The segment at 1-20 (MPRNTSHEHDHGLMVEASKP) is disordered.

Belongs to the ClpS family. Binds to the N-terminal domain of the chaperone ClpA.

Functionally, involved in the modulation of the specificity of the ClpAP-mediated ATP-dependent protein degradation. In Xanthomonas axonopodis pv. citri (strain 306), this protein is ATP-dependent Clp protease adapter protein ClpS.